We begin with the raw amino-acid sequence, 519 residues long: Major facilitator superfamily domain-containing protein 8 (519 aa).

The tract at residues 1–25 (MANLGSEAEREPLLGPGSPGSREWS) is disordered. Residues 1-41 (MANLGSEAEREPLLGPGSPGSREWSEIETQEHYKSRWKSVR) are Cytoplasmic-facing. The Dileucine internalization motif motif lies at 13 to 14 (LL). The chain crosses the membrane as a helical span at residues 42–62 (ILYLTMFLSSVGFSIVIMSIW). The Extracellular segment spans residues 63–75 (PYLQKIDQTADAS). Residues 76–96 (FLGWVIASYSLGQMVASPLFG) traverse the membrane as a helical segment. Over 97 to 106 (LWSNYRPRKE) the chain is Cytoplasmic. Residues 107–127 (PLIVSISISVAANCLYAYVHV) traverse the membrane as a helical segment. Residues 128 to 140 (PAAHNKYYMLIAR) are Extracellular-facing. A helical transmembrane segment spans residues 141-161 (GLVGFGAGNVAVVRSYIAGAT). The Cytoplasmic segment spans residues 162 to 174 (SLQERTNAMANTS). Residues 175–195 (TCQALGFILGPVFQTCFALIG) form a helical membrane-spanning segment. Over 196–212 (EKGVTWDIIKLQVNMYT) the chain is Extracellular. The chain crosses the membrane as a helical span at residues 213 to 233 (APVLLAAFLGILNIILILFIL). At 234 to 267 (REHRVDDLGRQCKSVNFQEENTDEPQIPEGSIDQ) the chain is on the cytoplasmic side. A helical membrane pass occupies residues 268-288 (VAVVATNIVFFVVLFIFAVYE). Over 289-310 (TILTPLTLDMYAWTQEQAVLYD) the chain is Extracellular. A helical membrane pass occupies residues 311-331 (GILLVAFGVEAVLVFMGVKLL). Residues 332 to 338 (SKKIGER) are Cytoplasmic-facing. Residues 339-359 (AILLGGFVVVWVGFFILLPWG) traverse the membrane as a helical segment. Over 360–416 (NQFPKIQWEDLHNSSTPNTTFGEIIIGLWNSSREDHSEQPTGCPIEQTWCLYTPVIH) the chain is Extracellular. N-linked (GlcNAc...) asparagine glycosylation is found at Asn-372 and Asn-377. The chain crosses the membrane as a helical span at residues 417-439 (LAQFLTAAVLIGTGYPACSVMSY). Over 440-452 (TLYSKVLGPKPQG) the chain is Cytoplasmic. The chain crosses the membrane as a helical span at residues 453 to 473 (IYMGWLTTSGSAARILGPVFI). Residues 474 to 483 (SHVYTYLGPR) are Extracellular-facing. A helical membrane pass occupies residues 484-504 (WAFSLVCGIVVLTILLIGAVY). Residues 505-519 (KRLVAFSVRYMRIQE) lie on the Cytoplasmic side of the membrane.

This sequence belongs to the major facilitator superfamily.

Its subcellular location is the endosome membrane. It localises to the lysosome membrane. It catalyses the reaction chloride(in) = chloride(out). The catalysed reaction is iodide(out) = iodide(in). It carries out the reaction fluoride(in) = fluoride(out). In terms of biological role, outward-rectifying chloride channel involved in endolysosomal chloride homeostasis, membrane fusion and function. Conducts chloride currents up to hundreds of picoamperes. Regulates lysosomal calcium content by reducing the lysosomal membrane potential, thereby activating TRPML1 channel and further release of lysosomal calcium ions. Regulates the pH in endolysosomal compartments and may contribute to progressive acidification from endosome to lysosome. Permeable to other halides such as iodide and fluoride ions. The sequence is that of Major facilitator superfamily domain-containing protein 8 from Mus musculus (Mouse).